A 106-amino-acid chain; its full sequence is MNTFRKTYVLKLYVAGNTPNSVRALKTLKTILEQEFQGVYALKVIDVLKNPQLAEEDKILATPTLAKVLPPPVRKIIGDLSDREKVLIGLDLLYDEIQDRESELDF.

Belongs to the KaiB family. The KaiABC complex composition changes during the circadian cycle to control KaiC phosphorylation. Complexes KaiC(6), KaiA(2-4):KaiC(6), KaiB(6):KaiC(6) and KaiC(6):KaiB(6):KaiA(12) are among the most important forms, many form cooperatively. Undergoes a major conformational rearrangment; in the free state forms homotetramers as a dimer of dimers. When bound to the CI domain of KaiC switches to a monomeric thioredoxin-fold (KaiB(fs)). KaiB(fs) binds CikA, leading it to dephosphorylate phospho-RpaA.

Its function is as follows. Key component of the KaiABC oscillator complex, which constitutes the main circadian regulator in cyanobacteria. Complex composition changes during the circadian cycle to control KaiC phosphorylation. KaiA stimulates KaiC autophosphorylation, while KaiB sequesters KaiA, leading to KaiC autodephosphorylation. Phospho-Ser-431 KaiC accumulation triggers binding of KaiB to form the KaiB(6):KaiC(6) complex, leading to changes in output regulators CikA and SasA. KaiB switches to a thioredoxin-like fold (KaiB(fs)) when bound to KaiC. KaiB(6):KaiC(6) formation exposes a site for KaiA binding that sequesters KaiA from KaiC, making the KaiC(6):KaiB(6):KaiA(12) complex that results in KaiC autodephosphorylation. A metamorphic protein which reversibly switches between an inactive tetrameric fold and a rare, thioredoxin-like monomeric fold (KaiB(fs)). KaiB(fs) binds phospho-KaiC, KaiA and CikA. KaiA and CikA compete for binding to KaiB(fs), and KaiB(fs) and SasA compete for binding to KaiC, thus the clock oscillator and output signal pathway are tightly coupled. The protein is Circadian clock oscillator protein KaiB of Gloeothece citriformis (strain PCC 7424) (Cyanothece sp. (strain PCC 7424)).